We begin with the raw amino-acid sequence, 471 residues long: Putative pentatricopeptide repeat-containing protein At1g53330 (471 aa).

PPR repeat units follow at residues 46-81, 82-116, 117-147, 151-185, 186-221, 222-256, 257-291, 292-326, 327-361, and 362-396; these read SLLCYDIIITKLGGSKMFDELDQVLLHLKTDTRIVP, TEIIFCNVINFFGRGKLPSRALHMFDEMPQYRCQR, TVKSLNSLLSALLKCGELEKMKERLSSIDEF, DACTYNILIHGCSQSGCFDDALKLFDEMVKKKVKP, TGVTFGTLIHGLCKDSRVKEALKMKHDMLKVYGVRP, TVHIYASLIKALCQIGELSFAFKLKDEAYEGKIKV, DAAIYSTLISSLIKAGRSNEVSMILEEMSEKGCKP, DTVTYNVLINGFCVENDSESANRVLDEMVEKGLKP, DVISYNMILGVFFRIKKWEEATYLFEDMPRRGCSP, and DTLSYRIVFDGLCEGLQFEEAAVILDEMLFKGYKP.

The protein belongs to the PPR family. P subfamily.

Involved during embryo development. The sequence is that of Putative pentatricopeptide repeat-containing protein At1g53330 from Arabidopsis thaliana (Mouse-ear cress).